We begin with the raw amino-acid sequence, 139 residues long: MAVCVAVIAKENYPLYIRSTPTENQLKFHYTVHTSLDVVDEKISAMGKAVMDQRELYLGLLYPTEDYKVYGYVTNSKVKFVMVVDSSNTSLRDNEIRSMFRKLHNSYTDVMCNPFYNPGDPIQSRAFDNTVTSMMVPAC.

It belongs to the TRAPP small subunits family. Sedlin subfamily.

It is found in the cytoplasm. The protein localises to the perinuclear region. Its subcellular location is the endoplasmic reticulum. The protein resides in the golgi apparatus. In terms of biological role, may play a role in vesicular transport from endoplasmic reticulum to Golgi. The chain is Trafficking protein particle complex subunit 2-like protein (trappc2l) from Xenopus tropicalis (Western clawed frog).